Consider the following 471-residue polypeptide: MAGATGIVTDIIGVVINAKFPEHETPEIYNALEIRLENGKRLVAEVQQQLGGGVVKAVAMSSTDGMRRGVKAIDTGRPIAVPVGPGTLGRVFDVLGDPIDGEGPVQTTEYRPIHRPPPALEDQSTTAQIFETGIKVIDLIAPFTRGGKTGIFGGAGVGKTVIIQELIANVAKEQSGYSVFAGVGERSREGNDLIHEMKEARIDEKTRVFDKTVMVFGQMNEPPGARLRVGLTAMTMAEYFRDEGRDVLLFIDNIFRFVQAGSEVSALLGRMPSQVGYQPTLGTEMGELQERITSTKKGSITSMQAVYVPADDYTDPAPATVFSHLDATITLERSIAAKGIYPAVDPLASTSRILDPNIVGEEHYRVAREVQRVLQRYKDLQDIIAILGVEELSDEDKLTVARARKIERFFSQPFTVAQQFTGRPGKYVPIGETVKSFARLLAGEVDHIPEQFFLLQGGLDDVIQAYEASRR.

Residue 153–160 (GGAGVGKT) participates in ATP binding.

The protein belongs to the ATPase alpha/beta chains family. In terms of assembly, F-type ATPases have 2 components, CF(1) - the catalytic core - and CF(0) - the membrane proton channel. CF(1) has five subunits: alpha(3), beta(3), gamma(1), delta(1), epsilon(1). CF(0) has four main subunits: a(1), b(1), b'(1) and c(9-12).

The protein resides in the cell membrane. The enzyme catalyses ATP + H2O + 4 H(+)(in) = ADP + phosphate + 5 H(+)(out). Produces ATP from ADP in the presence of a proton gradient across the membrane. The catalytic sites are hosted primarily by the beta subunits. The polypeptide is ATP synthase subunit beta (Roseiflexus castenholzii (strain DSM 13941 / HLO8)).